The primary structure comprises 400 residues: Lysophospholipid transporter LplT (400 aa).

11 consecutive transmembrane segments (helical) span residues 19–39, 53–73, 91–111, 139–159, 164–184, 227–247, 257–277, 281–301, 304–324, 352–372, and 373–393; these read VIVAQFLSAFGDNALLFATLA, VLQMVFVGAYILFAPFVGQIA, AGAAGICLGVNPFVGYTLVGI, LMEASTIAAILLGSVAGGVLA, IAALVACALAYAGAVAANLFI, LFWGAGVTLRFLLVLWVPVAL, YLNAMVAVGIVVGAGAAAKLV, TVSRCMPAGILIGVVVAIFSL, ALLPAYALLLLIGMLGGFFVV, NSAMLLMLGLYSLAVLVGVPA, and VAIGIGFGVLFALAIAALWIW.

The protein belongs to the major facilitator superfamily. LplT (TC 2.A.1.42) family.

It is found in the cell inner membrane. Its function is as follows. Catalyzes the facilitated diffusion of 2-acyl-glycero-3-phosphoethanolamine (2-acyl-GPE) into the cell. The protein is Lysophospholipid transporter LplT of Salmonella gallinarum (strain 287/91 / NCTC 13346).